The sequence spans 334 residues: Ferredoxin--NADP reductase (334 aa).

Residues Asp-33, Gln-41, Tyr-46, Ala-86, Phe-120, Asp-286, and Thr-327 each contribute to the FAD site.

This sequence belongs to the ferredoxin--NADP reductase type 2 family. In terms of assembly, homodimer. The cofactor is FAD.

It catalyses the reaction 2 reduced [2Fe-2S]-[ferredoxin] + NADP(+) + H(+) = 2 oxidized [2Fe-2S]-[ferredoxin] + NADPH. The chain is Ferredoxin--NADP reductase from Rickettsia prowazekii (strain Madrid E).